We begin with the raw amino-acid sequence, 124 residues long: MAKKKAKKSIAKGVVYVAATFNNTVITVTDEMGNVISWSSAGALGFKGSKKSTPFAATEAVADAMAKAKENGIKEVGIKVQGPGSGRDTAVKAIGATEGIRVTFLKDITPLPHNGCRPPKKRRV.

This sequence belongs to the universal ribosomal protein uS11 family. As to quaternary structure, part of the 30S ribosomal subunit. Interacts with proteins S7 and S18. Binds to IF-3.

Functionally, located on the platform of the 30S subunit, it bridges several disparate RNA helices of the 16S rRNA. Forms part of the Shine-Dalgarno cleft in the 70S ribosome. This Sulfurovum sp. (strain NBC37-1) protein is Small ribosomal subunit protein uS11.